A 419-amino-acid polypeptide reads, in one-letter code: Metacaspase-1A (419 aa).

A disordered region spans residues 1–89 (MHHQQSSYGG…PPDQPVSFGQ (89 aa)). The span at 41–51 (NGYNSPQQNYG) shows a compositional bias: polar residues. Residues 59–71 (YQQQSAYQNSYNQ) are compositionally biased toward low complexity. Active-site residues include H190 and C246.

It belongs to the peptidase C14B family.

Involved in cell death (apoptosis). The chain is Metacaspase-1A (casA) from Aspergillus oryzae (strain ATCC 42149 / RIB 40) (Yellow koji mold).